A 243-amino-acid polypeptide reads, in one-letter code: uncharacterized protein (243 aa).

The N-terminal stretch at 1–16 (MKLLALVALCAVGVAS) is a signal peptide. The N-linked (GlcNAc...) asparagine glycan is linked to asparagine 55. 2 disordered regions span residues 95–126 (SQGRNQQQQSNDVSSQGGNDDGSIPKAPEKPS) and 208–235 (NQQQQRQQPSSTTPASTSSTTLPPKPTV). Low complexity-rich tracts occupy residues 99–112 (NQQQQSNDVSSQGG) and 209–229 (QQQQRQQPSSTTPASTSSTTL). A disulfide bridge connects residues cysteine 141 and cysteine 239.

The protein belongs to the protease inhibitor I33 family.

It localises to the secreted. This is an uncharacterized protein from Caenorhabditis elegans.